Here is a 75-residue protein sequence, read N- to C-terminus: Large ribosomal subunit protein bL31 (75 aa).

Belongs to the bacterial ribosomal protein bL31 family. Type A subfamily. In terms of assembly, part of the 50S ribosomal subunit.

Its function is as follows. Binds the 23S rRNA. This chain is Large ribosomal subunit protein bL31, found in Acidiphilium cryptum (strain JF-5).